The chain runs to 663 residues: Bifunctional polymyxin resistance protein ArnA (663 aa).

Positions 1–307 (MSSKAVVFAY…ELGLVDGSVL (307 aa)) are formyltransferase ArnAFT. H106 serves as the catalytic Proton donor; for formyltransferase activity. Residues R116 and 138 to 142 (VKRAD) each bind (6R)-10-formyltetrahydrofolate. Residues 317-663 (RRTRVLILGV…EAMLEIADKK (347 aa)) are dehydrogenase ArnADH. NAD(+) is bound by residues D350 and 371–372 (DI). Residues A396, Y401, and 435–436 (TS) each bind UDP-alpha-D-glucuronate. E437 acts as the Proton acceptor; for decarboxylase activity in catalysis. UDP-alpha-D-glucuronate-binding positions include R463, N494, 528–537 (RLFDGGEQKR), and Y615. Residue R621 is the Proton donor; for decarboxylase activity of the active site.

It in the N-terminal section; belongs to the Fmt family. UDP-L-Ara4N formyltransferase subfamily. In the C-terminal section; belongs to the NAD(P)-dependent epimerase/dehydratase family. UDP-glucuronic acid decarboxylase subfamily. As to quaternary structure, homohexamer, formed by a dimer of trimers.

The catalysed reaction is UDP-alpha-D-glucuronate + NAD(+) = UDP-beta-L-threo-pentopyranos-4-ulose + CO2 + NADH. The enzyme catalyses UDP-4-amino-4-deoxy-beta-L-arabinose + (6R)-10-formyltetrahydrofolate = UDP-4-deoxy-4-formamido-beta-L-arabinose + (6S)-5,6,7,8-tetrahydrofolate + H(+). Its pathway is nucleotide-sugar biosynthesis; UDP-4-deoxy-4-formamido-beta-L-arabinose biosynthesis; UDP-4-deoxy-4-formamido-beta-L-arabinose from UDP-alpha-D-glucuronate: step 1/3. It participates in nucleotide-sugar biosynthesis; UDP-4-deoxy-4-formamido-beta-L-arabinose biosynthesis; UDP-4-deoxy-4-formamido-beta-L-arabinose from UDP-alpha-D-glucuronate: step 3/3. The protein operates within bacterial outer membrane biogenesis; lipopolysaccharide biosynthesis. In terms of biological role, bifunctional enzyme that catalyzes the oxidative decarboxylation of UDP-glucuronic acid (UDP-GlcUA) to UDP-4-keto-arabinose (UDP-Ara4O) and the addition of a formyl group to UDP-4-amino-4-deoxy-L-arabinose (UDP-L-Ara4N) to form UDP-L-4-formamido-arabinose (UDP-L-Ara4FN). The modified arabinose is attached to lipid A and is required for resistance to polymyxin and cationic antimicrobial peptides. The chain is Bifunctional polymyxin resistance protein ArnA from Pseudomonas fluorescens (strain SBW25).